The primary structure comprises 134 residues: Arsenate reductase (134 aa).

Residues Cys-11, Cys-83, and Cys-90 each act as nucleophile in the active site. 2 cysteine pairs are disulfide-bonded: Cys-11–Cys-83 and Cys-83–Cys-90.

It belongs to the low molecular weight phosphotyrosine protein phosphatase family. Thioredoxin-coupled ArsC subfamily.

Its subcellular location is the cytoplasm. The catalysed reaction is arsenate + [thioredoxin]-dithiol + H(+) = arsenite + [thioredoxin]-disulfide + H2O. Functionally, catalyzes the reduction of arsenate [As(V)] to arsenite [As(III)]. This chain is Arsenate reductase, found in Bacillus cereus (strain Q1).